The chain runs to 197 residues: dCTP deaminase, dUMP-forming (197 aa).

DCTP is bound by residues 105–110, Asp123, 131–133, Gln152, Tyr166, Lys174, and Gln178; these read RSSIGR and TLE. Residue Glu133 is the Proton donor/acceptor of the active site. Positions 161–183 are disordered; the sequence is PAERPYGHPSRDSKYIGQTRPQT. Residues 165-174 are compositionally biased toward basic and acidic residues; sequence PYGHPSRDSK.

Belongs to the dCTP deaminase family. In terms of assembly, homotrimer.

The catalysed reaction is dCTP + 2 H2O = dUMP + NH4(+) + diphosphate. It functions in the pathway pyrimidine metabolism; dUMP biosynthesis; dUMP from dCTP: step 1/1. Its function is as follows. Bifunctional enzyme that catalyzes both the deamination of dCTP to dUTP and the hydrolysis of dUTP to dUMP without releasing the toxic dUTP intermediate. This Methanothermobacter thermautotrophicus (strain ATCC 29096 / DSM 1053 / JCM 10044 / NBRC 100330 / Delta H) (Methanobacterium thermoautotrophicum) protein is dCTP deaminase, dUMP-forming.